The chain runs to 495 residues: Catalase (495 aa).

Residues 1-25 (MSNNKKLTSLFGAPVSDRENSMTAG) are disordered. Active-site residues include histidine 55 and asparagine 128. Tyrosine 338 serves as a coordination point for heme.

Belongs to the catalase family. As to quaternary structure, homodimer. Heme serves as cofactor.

The catalysed reaction is 2 H2O2 = O2 + 2 H2O. In terms of biological role, decomposes hydrogen peroxide into water and oxygen; serves to protect cells from the toxic effects of hydrogen peroxide. The polypeptide is Catalase (katA) (Staphylococcus saprophyticus subsp. saprophyticus (strain ATCC 15305 / DSM 20229 / NCIMB 8711 / NCTC 7292 / S-41)).